The chain runs to 320 residues: Glucosaminate ammonia-lyase (320 aa).

36–43 lines the FAD pocket; it reads TGMQAGGQ. A disulfide bond links Cys-136 and Cys-139. Position 285-294 (285-294) interacts with FAD; sequence DVADHVYRQA.

It belongs to the class-II pyridine nucleotide-disulfide oxidoreductase family.

It catalyses the reaction 2-amino-2-deoxy-D-gluconate = 2-dehydro-3-deoxy-D-gluconate + NH4(+). Its function is as follows. Catalyzes the conversion of 2-amino-2-deoxy-D-gluconate (GlcNA) to 2-keto-3-deoxy-D-gluconic acid (KDGA) and ammonia. The protein is Glucosaminate ammonia-lyase of Pseudomonas fluorescens.